The primary structure comprises 475 residues: UDP-glycosyltransferase 76E1 (475 aa).

Histidine 19 serves as the catalytic Proton acceptor. Histidine 19 provides a ligand contact to an anthocyanidin. Aspartate 109 (charge relay) is an active-site residue. The UDP-alpha-D-glucose site is built by threonine 131, alanine 329, glutamine 331, histidine 346, tryptophan 349, asparagine 350, serine 351, and glutamate 354. Alanine 369 is a binding site for an anthocyanidin. 2 residues coordinate UDP-alpha-D-glucose: aspartate 370 and glutamine 371.

This sequence belongs to the UDP-glycosyltransferase family. In terms of tissue distribution, expressed in flowers and fruits.

The protein localises to the cytoplasm. It localises to the nucleus. The enzyme catalyses 2-cis-(+)-abscisate + UDP-alpha-D-glucose = beta-D-glucopyranosyl cis-(+)-abscisate + UDP. In terms of biological role, glucosyltransferase acting on abscisic acid (ABA) but not on auxin (IAA). The polypeptide is UDP-glycosyltransferase 76E1 (Solanum lycopersicum (Tomato)).